A 344-amino-acid chain; its full sequence is Ribosomal RNA large subunit methyltransferase Cfr (344 aa).

The active-site Proton acceptor is the Glu90. A Radical SAM core domain is found at 97-330 (KQGWESFCIS…ATVRTQFGSE (234 aa)). The cysteines at positions 104 and 335 are disulfide-linked. Cys111, Cys115, and Cys118 together coordinate [4Fe-4S] cluster. S-adenosyl-L-methionine-binding positions include 157 to 158 (GE), Ser188, 211 to 213 (SLH), and Asn292. Catalysis depends on Cys335, which acts as the S-methylcysteine intermediate.

The protein belongs to the radical SAM superfamily. RlmN family. Cfr subfamily. It depends on [4Fe-4S] cluster as a cofactor.

It localises to the cytoplasm. The enzyme catalyses adenosine(2503) in 23S rRNA + 2 reduced [2Fe-2S]-[ferredoxin] + 2 S-adenosyl-L-methionine = 8-methyladenosine(2503) in 23S rRNA + 5'-deoxyadenosine + L-methionine + 2 oxidized [2Fe-2S]-[ferredoxin] + S-adenosyl-L-homocysteine. Its function is as follows. Specifically methylates position 8 of adenine 2503 in 23S rRNA. Confers resistance to some classes of antibiotics. The sequence is that of Ribosomal RNA large subunit methyltransferase Cfr from Clostridium botulinum (strain Langeland / NCTC 10281 / Type F).